The following is a 120-amino-acid chain: ATP-dependent Clp protease adapter protein ClpS (120 aa).

Belongs to the ClpS family. In terms of assembly, binds to the N-terminal domain of the chaperone ClpA.

Involved in the modulation of the specificity of the ClpAP-mediated ATP-dependent protein degradation. The polypeptide is ATP-dependent Clp protease adapter protein ClpS (Pseudomonas syringae pv. tomato (strain ATCC BAA-871 / DC3000)).